The following is a 174-amino-acid chain: Shikimate kinase 2 (174 aa).

12–17 contacts ATP; it reads GCGKTT. Positions 16 and 32 each coordinate Mg(2+). 3 residues coordinate substrate: Asp34, Arg58, and Gly79. The tract at residues 112 to 126 is LID domain; the sequence is EAYPLADQRPTLTGR. Arg120 is an ATP binding site. Substrate is bound at residue Arg139. ATP is bound at residue Gln155.

Belongs to the shikimate kinase family. AroL subfamily. In terms of assembly, monomer. The cofactor is Mg(2+).

The protein localises to the cytoplasm. The enzyme catalyses shikimate + ATP = 3-phosphoshikimate + ADP + H(+). It participates in metabolic intermediate biosynthesis; chorismate biosynthesis; chorismate from D-erythrose 4-phosphate and phosphoenolpyruvate: step 5/7. Functionally, catalyzes the specific phosphorylation of the 3-hydroxyl group of shikimic acid using ATP as a cosubstrate. The protein is Shikimate kinase 2 of Erwinia tasmaniensis (strain DSM 17950 / CFBP 7177 / CIP 109463 / NCPPB 4357 / Et1/99).